Here is a 325-residue protein sequence, read N- to C-terminus: Solute carrier family 35 member B1 (325 aa).

The next 8 helical transmembrane spans lie at 18–38, 54–74, 88–108, 139–159, 171–191, 213–233, 246–266, and 288–308; these read PVCFLGVFACYFYYGILQESI, FALSLVFIQCVINAAFAKLLI, WLYAACSLSYLGAMVSSNSAL, YPLAKYLCVLLIVTGVALFMY, IFGYGELLLLLSLTLDGLTGV, LWSTLFLGAGILFTGELWEFL, ILLFGLTSALGQSFIFMTVVY, and VILFANPISTMQWVGTVLVFL. The Di-lysine motif motif lies at 321–325; the sequence is KKTSH.

The protein belongs to the nucleotide-sugar transporter family. SLC35B subfamily.

Its subcellular location is the endoplasmic reticulum membrane. Its function is as follows. Probable sugar transporter. This is Solute carrier family 35 member B1 (SLC35B1) from Gallus gallus (Chicken).